The following is a 337-amino-acid chain: tRNA N6-adenosine threonylcarbamoyltransferase (337 aa).

Fe cation is bound by residues His111 and His115. Residues 134-138 (LVSGG), Asp167, Gly180, and Asn272 each bind substrate. Fe cation is bound at residue Asp300.

Belongs to the KAE1 / TsaD family. Fe(2+) serves as cofactor.

It is found in the cytoplasm. The enzyme catalyses L-threonylcarbamoyladenylate + adenosine(37) in tRNA = N(6)-L-threonylcarbamoyladenosine(37) in tRNA + AMP + H(+). Required for the formation of a threonylcarbamoyl group on adenosine at position 37 (t(6)A37) in tRNAs that read codons beginning with adenine. Is involved in the transfer of the threonylcarbamoyl moiety of threonylcarbamoyl-AMP (TC-AMP) to the N6 group of A37, together with TsaE and TsaB. TsaD likely plays a direct catalytic role in this reaction. In Salmonella arizonae (strain ATCC BAA-731 / CDC346-86 / RSK2980), this protein is tRNA N6-adenosine threonylcarbamoyltransferase.